A 183-amino-acid chain; its full sequence is Thioredoxin/glutathione peroxidase BtuE (183 aa).

Residue cysteine 37 is part of the active site.

Belongs to the glutathione peroxidase family. BtuE subfamily.

The protein resides in the periplasm. It carries out the reaction 2 glutathione + H2O2 = glutathione disulfide + 2 H2O. It catalyses the reaction a hydroperoxide + [thioredoxin]-dithiol = an alcohol + [thioredoxin]-disulfide + H2O. Non-specific peroxidase that can use thioredoxin or glutathione as a reducing agent. In vitro, utilizes preferentially thioredoxin A to decompose hydrogen peroxide as well as cumene-, tert-butyl-, and linoleic acid hydroperoxides, suggesting that it may have one or more organic hydroperoxide as its physiological substrate. The protein is Thioredoxin/glutathione peroxidase BtuE of Escherichia coli (strain K12).